Reading from the N-terminus, the 255-residue chain is Cell division protein ZapD (255 aa).

This sequence belongs to the ZapD family. Interacts with FtsZ.

Its subcellular location is the cytoplasm. Its function is as follows. Cell division factor that enhances FtsZ-ring assembly. Directly interacts with FtsZ and promotes bundling of FtsZ protofilaments, with a reduction in FtsZ GTPase activity. This Methylococcus capsulatus (strain ATCC 33009 / NCIMB 11132 / Bath) protein is Cell division protein ZapD.